The sequence spans 207 residues: Outer-membrane lipoprotein LolB (207 aa).

The N-terminal stretch at 1–21 (MPLPDFRLIRLLPLAALVLTA) is a signal peptide. Cys22 carries N-palmitoyl cysteine lipidation. Residue Cys22 is the site of S-diacylglycerol cysteine attachment.

It belongs to the LolB family. Monomer.

The protein localises to the cell outer membrane. Functionally, plays a critical role in the incorporation of lipoproteins in the outer membrane after they are released by the LolA protein. The protein is Outer-membrane lipoprotein LolB of Escherichia coli (strain K12 / MC4100 / BW2952).